An 88-amino-acid polypeptide reads, in one-letter code: Large ribosomal subunit protein bL27 (88 aa).

The protein belongs to the bacterial ribosomal protein bL27 family.

This Carboxydothermus hydrogenoformans (strain ATCC BAA-161 / DSM 6008 / Z-2901) protein is Large ribosomal subunit protein bL27.